The following is a 474-amino-acid chain: 15-cis-phytoene desaturase (474 aa).

It belongs to the carotenoid/retinoid oxidoreductase family.

The protein localises to the cell membrane. The catalysed reaction is 2 a plastoquinone + 15-cis-phytoene = 9,9',15-tri-cis-zeta-carotene + 2 a plastoquinol. The protein operates within carotenoid biosynthesis; lycopene biosynthesis. With respect to regulation, inhibited by the herbicide norflurazon in a non-competitive way. Its function is as follows. This enzyme converts phytoene into zeta-carotene via the intermediary of phytofluene by the symmetrical introduction of two double bonds at the C-11 and C-11' positions of phytoene. Also active with phytofluene and 1,2-epoxyphytoene as substrates. The polypeptide is 15-cis-phytoene desaturase (pds) (Synechococcus elongatus (strain ATCC 33912 / PCC 7942 / FACHB-805) (Anacystis nidulans R2)).